Consider the following 220-residue polypeptide: Vesicle-associated membrane protein 7 (220 aa).

Topologically, residues 2–188 (AILFAVVARG…ARAMCMKNLK (187 aa)) are cytoplasmic. The region spanning 7 to 110 (VVARGTTILA…AMNSEFSSVL (104 aa)) is the Longin domain. In terms of domain architecture, v-SNARE coiled-coil homology spans 125-185 (QVAETQAQVD…RNLARAMCMK (61 aa)). Residues 189–209 (LTIIIIIVSIVIIYIIVSAAC) traverse the membrane as a helical; Anchor for type IV membrane protein segment. At 210-220 (GGLAWPSCVQK) the chain is on the vesicular side.

This sequence belongs to the synaptobrevin family.

It localises to the cytoplasmic vesicle. It is found in the secretory vesicle membrane. Its subcellular location is the golgi apparatus. The protein localises to the trans-Golgi network membrane. The protein resides in the late endosome membrane. It localises to the lysosome membrane. It is found in the endoplasmic reticulum membrane. Its subcellular location is the phagosome membrane. The protein localises to the synapse. The protein resides in the synaptosome. Functionally, involved in the targeting and/or fusion of transport vesicles to their target membrane during transport of proteins from the early endosome to the lysosome. Required for heterotypic fusion of late endosomes with lysosomes and homotypic lysosomal fusion. Required for calcium regulated lysosomal exocytosis. Involved in the export of chylomicrons from the endoplasmic reticulum to the cis Golgi. Required for focal exocytosis of late endocytic vesicles during phagosome formation. The protein is Vesicle-associated membrane protein 7 of Gallus gallus (Chicken).